The chain runs to 611 residues: Elongation factor 1 alpha-like protein (611 aa).

Disordered stretches follow at residues 1–21 (MAYS…DEGE) and 105–138 (SISQ…DEKT). A Phosphoserine modification is found at Ser-124. The segment covering 126-138 (GERNGEEANDEKT) has biased composition (basic and acidic residues). The 226-residue stretch at 165 to 390 (LPHLSFVVLG…LENAAFKISK (226 aa)) folds into the tr-type G domain. A G1 region spans residues 174 to 181 (GHVDAGKS). A GTP-binding site is contributed by 174 to 181 (GHVDAGKS). The G2 stretch occupies residues 230 to 234 (GVTVS). A G3 region spans residues 251–254 (DAPG). GTP is bound by residues 313 to 316 (NKMD) and 352 to 354 (SGF). The segment at 313-316 (NKMD) is G4. The G5 stretch occupies residues 352 to 354 (SGF).

This sequence belongs to the TRAFAC class translation factor GTPase superfamily. Classic translation factor GTPase family. As to quaternary structure, component of the Dom34-Hbs1 complex, also named Pelota-HBS1L complex, composed of DOM34 and HBS1.

Its subcellular location is the cytoplasm. It carries out the reaction GTP + H2O = GDP + phosphate + H(+). Functionally, GTPase component of the Dom34-Hbs1 complex, a complex that recognizes stalled ribosomes and triggers the No-Go Decay (NGD) pathway. The Dom34-Hbs1 complex recognizes ribosomes stalled at the 3' end of an mRNA and engages stalled ribosomes by destabilizing mRNA in the mRNA channel. Following ribosome-binding, the Pelota-HBS1L complex promotes the disassembly of stalled ribosomes, followed by degradation of damaged mRNAs as part of the NGD pathway. The Dom34-Hbs1 complex is also involved in non-functional rRNA decay. The chain is Elongation factor 1 alpha-like protein from Saccharomyces cerevisiae (strain ATCC 204508 / S288c) (Baker's yeast).